The following is a 96-amino-acid chain: Defensin-like protein 69 (96 aa).

The first 19 residues, Met1–Ser19, serve as a signal peptide directing secretion. Intrachain disulfides connect Cys37–Cys86, Cys41–Cys64, Cys50–Cys84, and Cys54–Cys85.

It belongs to the DEFL family.

It localises to the secreted. This Arabidopsis thaliana (Mouse-ear cress) protein is Defensin-like protein 69.